The sequence spans 215 residues: Pyridoxine/pyridoxamine 5'-phosphate oxidase (215 aa).

Residues 9–12 (RRDY) and Lys69 contribute to the substrate site. FMN contacts are provided by residues 64–69 (RVLLLK), 79–80 (FT), Lys86, and Gln108. Substrate contacts are provided by Tyr126, Arg130, and Ser134. Residues 143 to 144 (QS) and Trp188 each bind FMN. Residue 194-196 (RLH) participates in substrate binding. Arg198 is an FMN binding site.

The protein belongs to the pyridoxamine 5'-phosphate oxidase family. In terms of assembly, homodimer. Requires FMN as cofactor.

It carries out the reaction pyridoxamine 5'-phosphate + O2 + H2O = pyridoxal 5'-phosphate + H2O2 + NH4(+). The catalysed reaction is pyridoxine 5'-phosphate + O2 = pyridoxal 5'-phosphate + H2O2. Its pathway is cofactor metabolism; pyridoxal 5'-phosphate salvage; pyridoxal 5'-phosphate from pyridoxamine 5'-phosphate: step 1/1. It participates in cofactor metabolism; pyridoxal 5'-phosphate salvage; pyridoxal 5'-phosphate from pyridoxine 5'-phosphate: step 1/1. In terms of biological role, catalyzes the oxidation of either pyridoxine 5'-phosphate (PNP) or pyridoxamine 5'-phosphate (PMP) into pyridoxal 5'-phosphate (PLP). The protein is Pyridoxine/pyridoxamine 5'-phosphate oxidase of Pseudomonas putida (strain GB-1).